Here is a 194-residue protein sequence, read N- to C-terminus: MNLIPTVIETTNRGERAYDIYSRLLKDRIIMLGSAIDDNVANSIVSQLLFLQAQDAEKDIYLYINSPGGSVTAGFAIYDTIQHIKPDVQTICIGMAASMGSFLLAAGAKGKRFALPNAEVMIHQPLGGAQGQATEIEIAATHILKTRAKLNKILAERTGQSIEQIEKDTDRDNFLTADEAKEYGLIDEVMQPEK.

Serine 98 (nucleophile) is an active-site residue. Residue histidine 123 is part of the active site.

It belongs to the peptidase S14 family. Fourteen ClpP subunits assemble into 2 heptameric rings which stack back to back to give a disk-like structure with a central cavity, resembling the structure of eukaryotic proteasomes.

Its subcellular location is the cytoplasm. It catalyses the reaction Hydrolysis of proteins to small peptides in the presence of ATP and magnesium. alpha-casein is the usual test substrate. In the absence of ATP, only oligopeptides shorter than five residues are hydrolyzed (such as succinyl-Leu-Tyr-|-NHMec, and Leu-Tyr-Leu-|-Tyr-Trp, in which cleavage of the -Tyr-|-Leu- and -Tyr-|-Trp bonds also occurs).. Its function is as follows. Cleaves peptides in various proteins in a process that requires ATP hydrolysis. Has a chymotrypsin-like activity. Plays a major role in the degradation of misfolded proteins. The polypeptide is ATP-dependent Clp protease proteolytic subunit (Staphylococcus carnosus (strain TM300)).